The following is a 310-amino-acid chain: Protoheme IX farnesyltransferase 2 (310 aa).

9 consecutive transmembrane segments (helical) span residues 21–41, 46–66, 99–119, 125–145, 153–173, 180–200, 226–246, 256–276, and 284–304; these read IWYLLVFTAFGAAVAASGIYG, IATWALMLFSVAAGSASANVL, FGLFLAGASMVMAACIALTTT, WAAAFIAFGLFNNVLVYSYML, IVLGGLCGGMPPMIGWVAVTT, GLVMGGLVFIWTPMHIWALTL, VIAVSTVAMALFSLAPLLITL, VYLATAAASGALIIALSAWVV, and AWVLFKFSSPYLAVLFIALMV.

It belongs to the UbiA prenyltransferase family. Protoheme IX farnesyltransferase subfamily.

It is found in the cell membrane. It carries out the reaction heme b + (2E,6E)-farnesyl diphosphate + H2O = Fe(II)-heme o + diphosphate. It functions in the pathway porphyrin-containing compound metabolism; heme O biosynthesis; heme O from protoheme: step 1/1. In terms of biological role, converts heme B (protoheme IX) to heme O by substitution of the vinyl group on carbon 2 of heme B porphyrin ring with a hydroxyethyl farnesyl side group. The chain is Protoheme IX farnesyltransferase 2 from Cenarchaeum symbiosum (strain A).